The sequence spans 514 residues: Ras-GEF domain-containing family member 1B-A (514 aa).

Residues His-76 to Thr-206 enclose the N-terminal Ras-GEF domain. Positions Asp-246–Pro-494 constitute a Ras-GEF domain.

As to expression, detected in oocytes, and in embryos at 4 to 120 hours post-fertilization (hpf). Detected along marginal blastomeres at early epiboly stage and throughout the margin at the onset of gastrulation. At 60% epiboly, strongest expression is found in the dorsal shield region and is restricted to the epiblast. Detected in the anterior border of the presomitic mesoderm at the end of epiboly. Detected in adaxial cells, in the somites and in the nervous system during somitogenesis. Detected in diencephalon and hindbrain and in cells surrounding the notochord, including adaxial cells and ventral mesendoderm, in 15-somite stage embryos. At 48 hpf, detected mainly in the brain.

Guanine nucleotide exchange factor (GEF) for Ras family proteins (in vitro). The chain is Ras-GEF domain-containing family member 1B-A (rasgef1ba) from Danio rerio (Zebrafish).